We begin with the raw amino-acid sequence, 215 residues long: Adenylate kinase (215 aa).

Residue 10–15 (GAGKGT) coordinates ATP. Residues 30–60 (STGDMLRAAIIKAGTEMGKQAKSVIDAGQLV) are NMP. AMP contacts are provided by residues threonine 31, arginine 36, 58 to 60 (QLV), 86 to 89 (GFPR), and glutamine 93. The segment at 123 to 160 (GRRAHLPSGRTYHVTFNPSKVEGQDDVTGEPLVIREDD) is LID. ATP contacts are provided by residues arginine 124 and 133-134 (TY). Arginine 157 and arginine 168 together coordinate AMP. Lysine 201 contacts ATP.

The protein belongs to the adenylate kinase family. As to quaternary structure, monomer.

The protein resides in the cytoplasm. It catalyses the reaction AMP + ATP = 2 ADP. It participates in purine metabolism; AMP biosynthesis via salvage pathway; AMP from ADP: step 1/1. Catalyzes the reversible transfer of the terminal phosphate group between ATP and AMP. Plays an important role in cellular energy homeostasis and in adenine nucleotide metabolism. The protein is Adenylate kinase of Aliivibrio salmonicida (strain LFI1238) (Vibrio salmonicida (strain LFI1238)).